Here is a 756-residue protein sequence, read N- to C-terminus: 1-phosphatidylinositol 4,5-bisphosphate phosphodiesterase delta-1 (756 aa).

The region spanning 21–130 (ALLKGSQLLK…WVLGLHKIIH (110 aa)) is the PH domain. A substrate binding region spans residues 30–57 (KVKSSSWRRERFYKLQEDCKTIWQESRK). EF-hand domains lie at 140-175 (KLQH…LNIQ) and 176-211 (VDDS…LTQR). Ca(2+) contacts are provided by Asp-153, Asn-155, Asp-157, Lys-159, Glu-164, Asp-189, Ser-191, Thr-193, Ser-195, and Glu-200. An O-linked (GlcNAc) serine glycan is attached at Ser-191. The O-linked (GlcNAc) threonine glycan is linked to Thr-193. The 145-residue stretch at 296-440 (QDMGQPLSHY…LKGKILLKGK (145 aa)) folds into the PI-PLC X-box domain. His-311 is an active-site residue. Ca(2+) is bound by residues Asn-312, Glu-341, and Asp-343. His-356 is a catalytic residue. Glu-390 is a Ca(2+) binding site. Residues Lys-438 and Lys-440 each coordinate substrate. Residue Thr-457 is modified to Phosphothreonine. Residue Ser-460 is modified to Phosphoserine. One can recognise a PI-PLC Y-box domain in the interval 492 to 609 (LSDMVIYCKS…GYVLKPAFLR (118 aa)). The substrate site is built by Ser-522 and Arg-549. Positions 611-737 (PNGTFNPRAL…QGYRHVHLMS (127 aa)) constitute a C2 domain. Ca(2+) contacts are provided by Ile-651, Asp-653, Asn-677, Asp-706, Tyr-707, and Asp-708.

Interacts with TGM2. Requires Ca(2+) as cofactor. In terms of tissue distribution, strongly expressed in lung, liver and heart. Also expressed at least in pancreas, kidney, skeletal muscle, placenta and brain.

It catalyses the reaction a 1,2-diacyl-sn-glycero-3-phospho-(1D-myo-inositol-4,5-bisphosphate) + H2O = 1D-myo-inositol 1,4,5-trisphosphate + a 1,2-diacyl-sn-glycerol + H(+). The catalysed reaction is a 1,2-diacyl-sn-glycero-3-phospho-(1D-myo-inositol) + H2O = 1D-myo-inositol 1-phosphate + a 1,2-diacyl-sn-glycerol + H(+). Its function is as follows. The production of the second messenger molecules diacylglycerol (DAG) and inositol 1,4,5-trisphosphate (IP3) is mediated by activated phosphatidylinositol-specific phospholipase C enzymes. Essential for trophoblast and placental development. Binds phosphatidylinositol 4,5-bisphosphate. The polypeptide is 1-phosphatidylinositol 4,5-bisphosphate phosphodiesterase delta-1 (Homo sapiens (Human)).